The sequence spans 129 residues: Flagellar assembly factor FliW 2 (129 aa).

This sequence belongs to the FliW family. Interacts with translational regulator CsrA and flagellin(s).

The protein localises to the cytoplasm. Its function is as follows. Acts as an anti-CsrA protein, binds CsrA and prevents it from repressing translation of its target genes, one of which is flagellin. Binds to flagellin and participates in the assembly of the flagellum. This chain is Flagellar assembly factor FliW 2, found in Helicobacter pylori (strain HPAG1).